The following is a 569-amino-acid chain: Spermatogenesis-associated protein 16 (569 aa).

This sequence belongs to the SPATA16 family.

It is found in the golgi apparatus. The protein localises to the cytoplasmic vesicle. It localises to the secretory vesicle. The protein resides in the acrosome. Essential for spermiogenesis and male fertility. Involved in the formation of sperm acrosome during spermatogenesis. The chain is Spermatogenesis-associated protein 16 (SPATA16) from Macaca fascicularis (Crab-eating macaque).